The primary structure comprises 692 residues: Meiotic sister-chromatid recombination protein 6, mitochondrial (692 aa).

The N-terminal 30 residues, 1 to 30, are a transit peptide targeting the mitochondrion; it reads MLSHNALRAFDCSKVIISRRCLTSSTSIYQ.

Its subcellular location is the mitochondrion. In terms of biological role, may be involved in the control of meiotic sister-chromatid recombination. The sequence is that of Meiotic sister-chromatid recombination protein 6, mitochondrial (MSC6) from Saccharomyces cerevisiae (strain ATCC 204508 / S288c) (Baker's yeast).